The primary structure comprises 292 residues: Coatomer subunit epsilon-1 (292 aa).

The protein belongs to the COPE family. In terms of assembly, oligomeric complex that consists of at least the alpha, beta, beta', gamma, delta, epsilon and zeta subunits.

It is found in the cytoplasm. It localises to the golgi apparatus membrane. The protein resides in the cytoplasmic vesicle. The protein localises to the COPI-coated vesicle membrane. Its function is as follows. The coatomer is a cytosolic protein complex that binds to dilysine motifs and reversibly associates with Golgi non-clathrin-coated vesicles, which further mediate biosynthetic protein transport from the ER, via the Golgi up to the trans Golgi network. The coatomer complex is required for budding from Golgi membranes, and is essential for the retrograde Golgi-to-ER transport of dilysine-tagged proteins. This chain is Coatomer subunit epsilon-1, found in Arabidopsis thaliana (Mouse-ear cress).